The sequence spans 1501 residues: MCKMAIIPDWLRSHPHTRKFTHSRPHSSPCRVYSRNGSPNKFRSSSTTAVANPTLSSLDVKRILFQKITDRGDELQKAFQLLDTGQNLTVSKSELRRIITDFLMPLTREQFQDVLAQIPLSTSGTVPYLAFLSRFGGIDLYINGIKRGGGNEMNCCRTLRELEIQVGEKVFKNIKTVMKAFELIDVNKTGLVRPQELRRVLETFCMKLRDEEYEKFSKHYNIHKDTAVDYNVFLKNLSINNDLNLRYCMGNQEVSLENQQAKNSKKERLLGSASSEDIWRNYSLDEIERNFCLQLSKSYEKVEKALSAGDPCKGGYVSFNYLKIVLDTFVYQIPRRIFIQLMKRFGLKATTKINWKQFLTSFHEPQGLQVSSKGPLTKRNSINSRNESHKENIITKLFRHTEDHSASLKKALLIINTKPDGPITREEFRYILNCMAVKLSDSEFKELMQMLDPGDTGVVNTSMFIDLIEENCRMRKTSPCTDAKTPFLLAWDSVEEIVHDTITRNLQAFYNMLRSYDLGDTGRIGRNNFKKIMHVFCPFLTNAHFIKLCSKIQDIGSGRILYKKLLACIGIDGPPTVSPVLVPKDQLLSEHLQKDEQQQPDLSERTKLTEDKTTLTKKMTTEEVIEKFKKCIQQQDPAFKKRFLDFSKEPNGKINVHDFKKVLEDTGMPMDDDQYALLTTKIGFEKEGMSYLDFAAGFEDPPMRGPETTPPQPPTPSKSYVNSHFITAEECLKLFPRRLKESFRDPYSAFFKTDADRDGIINMHDLHRLLLHLLLNLKDDEFERFLGLLGLRLSVTLNFREFQNLCEKRPWRTDEAPQRLIRPKQKVADSELACEQAHQYLVTKAKNRWSDLSKNFLETDNEGNGILRRRDIKNALYGFDIPLTPREFEKLWARYDTEGKGHITYQEFLQKLGINYSPAVHRPCAEDYFNFMGHFTKPQQLQEEMKELQQSTEKAVAARDKLMDRHQDISKAFTKTDQSKTNYISICKMQEVLEECGCSLTEGELTHLLNSWGVSRHDNAINYLDFLRAVENSKSTGAQPKEKEESMPINFATLNPQEAVRKIQEVVESSQLALSTAFSALDKEDTGFVKATEFGQVLKDFCYKLTDNQYHYFLRKLRIHLTPYINWKYFLQNFSCFLEETADEWAEKMPKGPPPTSPKATADRDILARLHKAVTSHYHAITQEFENFDTMKTNTISREEFRAICNRRVQILTDEQFDRLWNEMPVNAKGRLKYPDFLSRFSSETAATPMATGDSAVAQRGSSVPDVSEGTRSALSLPTQELRPGSKSQSHPCTPASTTVIPGTPPLQNCDPIESRLRKRIQGCWRQLLKECKEKDVARQGDINASDFLALVEKFNLDISKEECQQLIIKYDLKSNGKFAYCDFIQSCVLLLKAKESSLMHRMKIQNAHKMKEAGAETPSFYSALLRIQPKIVHCWRPMRRTFKSYDEAGTGLLSVADFRTVLRQYSINLSEEEFFHILEYYDKTLSSKISYNDFLRAFLQ.

The disordered stretch occupies residues 18 to 47 (RKFTHSRPHSSPCRVYSRNGSPNKFRSSST). A compositionally biased stretch (polar residues) spans 35 to 47 (RNGSPNKFRSSST). EF-hand domains are found at residues 70-105 (DRGDELQKAFQLLDTGQNLTVSKSELRRIITDFLMP), 172-207 (KNIKTVMKAFELIDVNKTGLVRPQELRRVLETFCMK), 297-332 (KSYEKVEKALSAGDPCKGGYVSFNYLKIVLDTFVYQ), 403-438 (DHSASLKKALLIINTKPDGPITREEFRYILNCMAVK), 439-474 (LSDSEFKELMQMLDPGDTGVVNTSMFIDLIEENCRM), 504-539 (RNLQAFYNMLRSYDLGDTGRIGRNNFKKIMHVFCPF), and 634-669 (QQDPAFKKRFLDFSKEPNGKINVHDFKKVLEDTGMP). The tract at residues 699–718 (EDPPMRGPETTPPQPPTPSK) is disordered. EF-hand domains follow at residues 741 to 776 (ESFRDPYSAFFKTDADRDGIINMHDLHRLLLHLLLN), 847 to 882 (NRWSDLSKNFLETDNEGNGILRRRDIKNALYGFDIP), 883 to 918 (LTPREFEKLWARYDTEGKGHITYQEFLQKLGINYSP), 964 to 999 (DRHQDISKAFTKTDQSKTNYISICKMQEVLEECGCS), 1069 to 1104 (SSQLALSTAFSALDKEDTGFVKATEFGQVLKDFCYK), 1176 to 1211 (SHYHAITQEFENFDTMKTNTISREEFRAICNRRVQI), and 1212 to 1247 (LTDEQFDRLWNEMPVNAKGRLKYPDFLSRFSSETAA). Ca(2+)-binding residues include Asp-754, Asp-756, Asp-758, and Asp-765. Thr-884 bears the Phosphothreonine mark. A disordered region spans residues 1246 to 1307 (AATPMATGDS…TTVIPGTPPL (62 aa)). Composition is skewed to polar residues over residues 1270–1279 (GTRSALSLPT) and 1286–1301 (SKSQSHPCTPASTTVI). Ser-1290 bears the Phosphoserine mark. Phosphothreonine is present on residues Thr-1294 and Thr-1304. The tract at residues 1303–1501 (GTPPLQNCDP…YNDFLRAFLQ (199 aa)) is interaction with PARK7. EF-hand domains lie at 1359–1394 (ISKEECQQLIIKYDLKSNGKFAYCDFIQSCVLLLKA), 1434–1469 (HCWRPMRRTFKSYDEAGTGLLSVADFRTVLRQYSIN), and 1470–1501 (LSEEEFFHILEYYDKTLSSKISYNDFLRAFLQ). The tract at residues 1407–1501 (NAHKMKEAGA…YNDFLRAFLQ (95 aa)) is interaction with AR.

As to quaternary structure, microtubule inner protein component of sperm flagellar doublet microtubules. Binds PARK7. Part of a ternary complex containing PARK7, EFCAB6/DJBP and AR. In terms of tissue distribution, specifically expressed in the testis.

The protein resides in the nucleus. The protein localises to the cytoplasm. Its subcellular location is the cytoskeleton. It localises to the flagellum axoneme. In terms of biological role, negatively regulates the androgen receptor by recruiting histone deacetylase complex, and protein DJ-1 antagonizes this inhibition by abrogation of this complex. Microtubule inner protein (MIP) part of the dynein-decorated doublet microtubules (DMTs) in cilia axoneme, which is required for motile cilia beating. This chain is EF-hand calcium-binding domain-containing protein 6, found in Homo sapiens (Human).